The sequence spans 165 residues: NADPH-dependent 7-cyano-7-deazaguanine reductase (165 aa).

The active-site Thioimide intermediate is the Cys56. Asp63 (proton donor) is an active-site residue. Substrate is bound by residues 78-80 and 97-98; these read VES and HE.

This sequence belongs to the GTP cyclohydrolase I family. QueF type 1 subfamily.

The protein localises to the cytoplasm. The enzyme catalyses 7-aminomethyl-7-carbaguanine + 2 NADP(+) = 7-cyano-7-deazaguanine + 2 NADPH + 3 H(+). It participates in tRNA modification; tRNA-queuosine biosynthesis. Its function is as follows. Catalyzes the NADPH-dependent reduction of 7-cyano-7-deazaguanine (preQ0) to 7-aminomethyl-7-deazaguanine (preQ1). This Bacillus cytotoxicus (strain DSM 22905 / CIP 110041 / 391-98 / NVH 391-98) protein is NADPH-dependent 7-cyano-7-deazaguanine reductase.